A 682-amino-acid chain; its full sequence is Zinc finger protein 16 (682 aa).

Residues 1-10 are compositionally biased toward basic and acidic residues; that stretch reads MPSLRTRREE. The tract at residues 1–43 is disordered; that stretch reads MPSLRTRREEAEMELSVPGPSPWTPAAQARVRDAPAVTHPGSA. The segment at 62-210 is necessary for transcription activation; sequence YQQPDCDTRT…GVPTAESPLI (149 aa). The segment at 209–231 adopts a C2H2-type 1; degenerate zinc-finger fold; the sequence is LICNECGKTFQGNPDLIQRQIVH. The C2H2-type 2; degenerate zinc finger occupies 237-259; sequence FMCDDCGKTFSQNSVLKNRHRSH. Lys253 is covalently cross-linked (Glycyl lysine isopeptide (Lys-Gly) (interchain with G-Cter in SUMO2)). 8 C2H2-type zinc fingers span residues 265 to 287, 293 to 315, 321 to 343, 349 to 371, 377 to 399, 405 to 427, 433 to 455, and 461 to 483; these read YQCS…QSHH, YMCN…QKSH, YECN…QRIH, YVCS…HRTH, FECG…QRVH, YECN…HRVH, YKCS…RRIH, and HVCN…QIIH. Required for nuclear localization stretches follow at residues 268-393 and 341-373; these read SECG…AHLR and RIHS…THTG. The required for nuclear localization stretch occupies residues 473–503; it reads SSVLRKHQIIHTGEKPYRCSVCGKAFSHSSA. An N6-acetyllysine modification is found at Lys487. C2H2-type zinc fingers lie at residues 489–511, 517–539, 545–567, 573–595, 601–623, 629–651, and 657–679; these read YRCS…QGVH, YACH…QRVH, YECT…QRIH, HECN…QKVH, YTCV…QIIH, YKCS…QRIH, and YDCA…QLIH.

This sequence belongs to the krueppel C2H2-type zinc-finger protein family. In terms of assembly, interacts with INCA1; the interaction inhibits INCA1 activity and induces the cell cycle process. In terms of tissue distribution, ubiquitous.

The protein localises to the nucleus. In terms of biological role, acts as a transcriptional activator. Promotes cell proliferation by facilitating the cell cycle phase transition from the S to G2/M phase. Involved in both the hemin- and phorbol myristate acetate (PMA)-induced erythroid and megakaryocytic differentiation, respectively. Also plays a role as an inhibitor of cell apoptosis. The sequence is that of Zinc finger protein 16 (ZNF16) from Homo sapiens (Human).